Consider the following 101-residue polypeptide: Small ribosomal subunit protein uS14 (101 aa).

This sequence belongs to the universal ribosomal protein uS14 family. As to quaternary structure, part of the 30S ribosomal subunit. Contacts proteins S3 and S10.

In terms of biological role, binds 16S rRNA, required for the assembly of 30S particles and may also be responsible for determining the conformation of the 16S rRNA at the A site. This is Small ribosomal subunit protein uS14 from Brucella anthropi (strain ATCC 49188 / DSM 6882 / CCUG 24695 / JCM 21032 / LMG 3331 / NBRC 15819 / NCTC 12168 / Alc 37) (Ochrobactrum anthropi).